The sequence spans 529 residues: MDSDEGYNYEFDDEEECSEDSGADEHEDDLELGEVELVEAGLSGSERAGICGEGGGSALGPGPGGEEEEDYRYEVLTAEQILQHMVECIREVNEVIQNPATITRILLSHFNWDKEKLMERYFDGNLEKLFSECHVINPSKKSRTRQMNTRSSAQDMPCQICYLNYPNSYFTGLECGHKFCMQCWSEYLTTKIIEEGMGQTISCPAHGCDILVDDNTVMRLITDSKVKLKYQHLITNSFVECNRLLKWCPAPDCHHVVKVQYPDAKPVRCKCGRQFCFNCGENWHDPVKCKWLKKWIKKCDDDSETSNWIAANTKECPKCHVTIEKDGGCNHMVCRNQNCKAEFCWVCLGPWEPHGSAWYNCNRYNEDDAKAARDAQERSRAALQRYLFYCNRYMNHMQSLRFEHKLYAQVKQKMEEMQQHNMSWIEVQFLKKAVDVLCQCRSTLMYTYVFAFYLKKNNQSIIFENNQADLENATEVLSGYLERDISQDSLQDIKQKVQDKYRYCESRRRVLLLHVHEGYEKDLWEYIED.

2 disordered regions span residues 1-30 (MDSD…EDDL) and 49-68 (GICG…GEEE). Residues 51-64 (CGEGGGSALGPGPG) are compositionally biased toward gly residues. Residues 77 to 125 (TAEQILQHMVECIREVNEVIQNPATITRILLSHFNWDKEKLMERYFDGN) form a UBA-like region. The segment at 154 to 365 (QDMPCQICYL…SAWYNCNRYN (212 aa)) is TRIAD supradomain. Residues Cys158, Cys161, Cys175, His177, Cys180, Cys183, Cys203, Cys208, Cys248, Cys253, Cys269, Cys271, Cys276, Cys279, His284, Cys289, Cys316, and Cys319 each coordinate Zn(2+). Residues 158–208 (CQICYLNYPNSYFTGLECGHKFCMQCWSEYLTTKIIEEGMGQTISCPAHGC) form an RING-type 1 zinc finger. The IBR-type zinc finger occupies 228–289 (LKYQHLITNS…GENWHDPVKC (62 aa)). Residues 316–347 (CPKCHVTIEKDGGCNHMVCRNQNCKAEFCWVC) form an RING-type 2; atypical zinc finger. Residue Cys329 is part of the active site. 6 residues coordinate Zn(2+): Cys334, Cys339, Cys344, Cys347, His354, and Cys361. The ariadne domain stretch occupies residues 380 to 529 (RAALQRYLFY…EKDLWEYIED (150 aa)).

The protein belongs to the RBR family. Ariadne subfamily. In terms of assembly, interacts (via the first RING-type zinc finger) with ube2l3. Associates with cullin-RING ubiquitin ligase (CRL) complexes containing neddylated cullin.

The protein localises to the cytoplasm. Its subcellular location is the nucleus. It carries out the reaction [E2 ubiquitin-conjugating enzyme]-S-ubiquitinyl-L-cysteine + [acceptor protein]-L-lysine = [E2 ubiquitin-conjugating enzyme]-L-cysteine + [acceptor protein]-N(6)-ubiquitinyl-L-lysine.. The protein operates within protein modification; protein ubiquitination. With respect to regulation, autoinhibited by the ariadne domain, which masks the second RING-type zinc finger that contains the active site and inhibits the E3 activity. Inhibition is relieved upon binding to neddylated cullin-RING ubiquitin ligase complexes, which activate the E3 ligase activity of ARIH1. Functionally, E3 ubiquitin-protein ligase, which catalyzes ubiquitination of target proteins together with ubiquitin-conjugating enzyme E2 ube2l3. Acts as an atypical E3 ubiquitin-protein ligase by working together with cullin-RING ubiquitin ligase (CRL) complexes and initiating ubiquitination of CRL substrates: associates with CRL complexes and specifically mediates addition of the first ubiquitin on CRLs targets. The initial ubiquitin is then elongated. E3 ubiquitin-protein ligase activity is activated upon binding to neddylated cullin-RING ubiquitin ligase complexes. The chain is E3 ubiquitin-protein ligase arih1 (arih1) from Xenopus tropicalis (Western clawed frog).